Consider the following 176-residue polypeptide: NAD(P)H-quinone oxidoreductase subunit 6, chloroplastic (176 aa).

5 helical membrane passes run 10 to 30 (FLLV…VLLP), 32 to 52 (PIFS…LYIL), 61 to 81 (AQLL…VMFM), 92 to 112 (LWTV…FLLM), and 152 to 172 (FFLP…GAIS).

This sequence belongs to the complex I subunit 6 family. As to quaternary structure, NDH is composed of at least 16 different subunits, 5 of which are encoded in the nucleus.

The protein localises to the plastid. It localises to the chloroplast thylakoid membrane. It carries out the reaction a plastoquinone + NADH + (n+1) H(+)(in) = a plastoquinol + NAD(+) + n H(+)(out). The catalysed reaction is a plastoquinone + NADPH + (n+1) H(+)(in) = a plastoquinol + NADP(+) + n H(+)(out). Functionally, NDH shuttles electrons from NAD(P)H:plastoquinone, via FMN and iron-sulfur (Fe-S) centers, to quinones in the photosynthetic chain and possibly in a chloroplast respiratory chain. The immediate electron acceptor for the enzyme in this species is believed to be plastoquinone. Couples the redox reaction to proton translocation, and thus conserves the redox energy in a proton gradient. This is NAD(P)H-quinone oxidoreductase subunit 6, chloroplastic (ndhG) from Olimarabidopsis pumila (Dwarf rocket).